A 352-amino-acid chain; its full sequence is Transcription factor MYB86 (352 aa).

HTH myb-type domains are found at residues 9 to 61 and 62 to 116; these read KQKL…INYL and RPDL…KKKL. 2 DNA-binding regions (H-T-H motif) span residues 37-61 and 89-112; these read WSSV…INYL and WSQI…NSCL.

As to expression, expressed in stems, flowers and seeds. Weakly expressed in leaves and roots.

The protein resides in the nucleus. Functionally, probable transcription factor. The chain is Transcription factor MYB86 (MYB86) from Arabidopsis thaliana (Mouse-ear cress).